A 188-amino-acid polypeptide reads, in one-letter code: Elongation factor P (188 aa).

Belongs to the elongation factor P family.

It localises to the cytoplasm. The protein operates within protein biosynthesis; polypeptide chain elongation. Involved in peptide bond synthesis. Stimulates efficient translation and peptide-bond synthesis on native or reconstituted 70S ribosomes in vitro. Probably functions indirectly by altering the affinity of the ribosome for aminoacyl-tRNA, thus increasing their reactivity as acceptors for peptidyl transferase. In Phenylobacterium zucineum (strain HLK1), this protein is Elongation factor P.